Here is a 111-residue protein sequence, read N- to C-terminus: uncharacterized protein (111 aa).

This sequence to A.fulgidus AF1864.

This is an uncharacterized protein from Aquifex aeolicus (strain VF5).